A 245-amino-acid chain; its full sequence is E3 ubiquitin-protein ligase RNF138 (245 aa).

At Ala2 the chain carries N-acetylalanine. The RING-type zinc-finger motif lies at 18–58 (CPVCQEVLKTPVRTAACQHVFCRKCFLTAMRESGIHCPLCR). Positions 86, 89, 101, and 105 each coordinate Zn(2+). Residues 86–105 (CRCCAKQIKFYRMRHHYKSC) form a C2HC RNF-type zinc finger. A disordered region spans residues 128 to 153 (VGNSNRSETSASDNIETYQENTGSSG). C2H2-type zinc fingers lie at residues 157–180 (FKCPLCQESNFTRQRLLDHCNSNH) and 187–215 (VTCPICVSLPWGDPSQVTRNFVSHLNQRH). One can recognise a UIM domain in the interval 225 to 243 (LQLDEETQYQTAVEESFQV).

Interacts with NLK. Interacts with XRCC5/Ku80. Interacts with RBBP8/CtIP. Post-translationally, auto-ubiquitinated.

It localises to the chromosome. The enzyme catalyses S-ubiquitinyl-[E2 ubiquitin-conjugating enzyme]-L-cysteine + [acceptor protein]-L-lysine = [E2 ubiquitin-conjugating enzyme]-L-cysteine + N(6)-ubiquitinyl-[acceptor protein]-L-lysine.. The protein operates within protein modification; protein ubiquitination. Functionally, E3 ubiquitin-protein ligase involved in DNA damage response by promoting DNA resection and homologous recombination. Recruited to sites of double-strand breaks following DNA damage and specifically promotes double-strand break repair via homologous recombination. Two different, non-exclusive, mechanisms have been proposed. According to a report, regulates the choice of double-strand break repair by favoring homologous recombination over non-homologous end joining (NHEJ): acts by mediating ubiquitination of XRCC5/Ku80, leading to remove the Ku complex from DNA breaks, thereby promoting homologous recombination. According to another report, cooperates with UBE2Ds E2 ubiquitin ligases (UBE2D1, UBE2D2, UBE2D3 or UBE2D4) to promote homologous recombination by mediating ubiquitination of RBBP8/CtIP. Together with NLK, involved in the ubiquitination and degradation of TCF/LEF. Also exhibits auto-ubiquitination activity in combination with UBE2K. May act as a negative regulator in the Wnt/beta-catenin-mediated signaling pathway. This chain is E3 ubiquitin-protein ligase RNF138 (RNF138), found in Bos taurus (Bovine).